Consider the following 565-residue polypeptide: Cytokinin dehydrogenase 2 (565 aa).

The N-terminal stretch at 1-20 (MKQEQVRMAVLLMLNCFVKA) is a signal peptide. A glycan (N-linked (GlcNAc...) asparagine) is linked at Asn64. One can recognise an FAD-binding PCMH-type domain in the interval 74–255 (RLAAAAAVLY…TRARIPLAPA (182 aa)). Ala108, Gly110, and Gly112 together coordinate FAD. His113 is modified (pros-8alpha-FAD histidine). FAD is bound by residues Ser114, Gln118, Asp179, Thr184, Ser190, Ile194, and Ile245. N-linked (GlcNAc...) asparagine glycosylation occurs at Asn464. Residues Tyr517, Ser554, and Gln557 each contribute to the FAD site.

Belongs to the oxygen-dependent FAD-linked oxidoreductase family. In terms of assembly, monomer. FAD serves as cofactor. Glycosylated. As to expression, mostly expressed in leaves, culms, inflorescence meristems, and flowers, especially in vascular tissues.

Its subcellular location is the secreted. It localises to the extracellular space. It catalyses the reaction N(6)-dimethylallyladenine + A + H2O = 3-methyl-2-butenal + adenine + AH2. In terms of biological role, catalyzes the oxidation of cytokinins, a family of N(6)-substituted adenine derivatives that are plant hormones, where the substituent is an isopentenyl group. Is a major QTL involved in grain yield. Modulates the number of reproductive organs by regulating the cytokinin accumulation in inflorescence meristems. Acts as negative regulator of panicle branching. This Oryza sativa subsp. japonica (Rice) protein is Cytokinin dehydrogenase 2.